The primary structure comprises 221 residues: SIN3-HDAC complex-associated factor (221 aa).

The span at 112 to 121 (QKEFKRHNSD) shows a compositional bias: basic and acidic residues. Disordered stretches follow at residues 112-152 (QKEF…MASG) and 201-221 (AAAEKPEEQGPEPLPISTQEW). The span at 124–135 (STTSSASPAQSP) shows a compositional bias: low complexity. Over residues 136–152 (CYSNQSDDGSDTEMASG) the composition is skewed to polar residues.

The protein belongs to the SINHCAF family. As to quaternary structure, interacts with the Sin3/HDAC corepressor complex at least composed of BRMS1, BRMS1L, ING2, SAP30, SAP30L and HDAC1. Found in a complex composed of at least SINHCAF, SIN3A, HDAC1, SAP30, RBBP4, OGT and TET1. Interacts with SIN3A and OGT.

Its subcellular location is the nucleus. Its function is as follows. Subunit of the Sin3 deacetylase complex (Sin3/HDAC), this subunit is important for the repression of genes encoding components of the TGF-beta signaling pathway. Core component of a SIN3A complex (composed of at least SINHCAF, SIN3A, HDAC1, SAP30, RBBP4, OGT and TET1) present in embryonic stem (ES) cells. Promotes the stability of SIN3A and its presence on chromatin and is essential for maintaining the potential of ES cells to proliferate rapidly, while ensuring a short G1-phase of the cell cycle, thereby preventing premature lineage priming. The protein is SIN3-HDAC complex-associated factor of Homo sapiens (Human).